The primary structure comprises 760 residues: Transferrin receptor protein 1 (760 aa).

Topologically, residues 1–67 are cytoplasmic; sequence MMDQARSAFS…KPKRCSGSIC (67 aa). The segment at 1–67 is mediates interaction with SH3BP4; it reads MMDQARSAFS…KPKRCSGSIC (67 aa). 2 positions are modified to phosphoserine: S10 and S19. Y20 is subject to Phosphotyrosine. The Endocytosis signal motif lies at 20–23; that stretch reads YTRF. Phosphothreonine is present on T21. S24 carries the post-translational modification Phosphoserine. A Stop-transfer sequence motif is present at residues 58 to 61; sequence KPKR. 2 S-palmitoyl cysteine lipidation sites follow: C62 and C67. The chain crosses the membrane as a helical; Signal-anchor for type II membrane protein span at residues 68 to 88; that stretch reads YGTIAVIVFFLIGFMIGYLGY. Residues 89 to 760 are Extracellular-facing; sequence CKGVEPKTEC…GDVWDIDNEF (672 aa). O-linked (GalNAc...) threonine glycosylation occurs at T104. Residues 223–313 enclose the PA domain; that stretch reads SKAATVTGKL…GTGDPYTPGF (91 aa). N251 and N317 each carry an N-linked (GlcNAc...) asparagine glycan. A ligand-binding region spans residues 569-760; that stretch reads TMDTYKELIE…GDVWDIDNEF (192 aa). Residues 646–648 carry the Cell attachment site; required for binding to transferrin motif; it reads RGD. An N-linked (GlcNAc...) asparagine glycan is attached at N727.

It belongs to the peptidase M28 family. M28B subfamily. Homodimer; disulfide-linked. Binds one transferrin or HFE molecule per subunit. Binds the HLA class II histocompatibility antigen, DR1. Interacts with SH3BP3. Interacts with STEAP3; facilitates TFRC endocytosis in erythroid precursor cells. Interacts with GRM2. As to quaternary structure, (Microbial infection) Interacts with Guanarito, Junin and Machupo arenavirus glycoprotein complex. In terms of assembly, (Microbial infection) Interacts with rabies virus protein G. (Microbial infection) Interacts with SARS-CoV-2 spike protein S. In terms of processing, stearoylated by ZDHHC6 which inhibits TFRC-mediated activation of the JNK pathway and promotes mitochondrial fragmentation. Stearoylation does not affect iron uptake. N- and O-glycosylated, phosphorylated and palmitoylated. The serum form is only glycosylated. Post-translationally, proteolytically cleaved on Arg-100 to produce the soluble serum form (sTfR). In terms of processing, palmitoylated on both Cys-62 and Cys-67. Cys-62 seems to be the major site of palmitoylation.

The protein localises to the cell membrane. The protein resides in the melanosome. It localises to the secreted. Cellular uptake of iron occurs via receptor-mediated endocytosis of ligand-occupied transferrin receptor into specialized endosomes. Endosomal acidification leads to iron release. The apotransferrin-receptor complex is then recycled to the cell surface with a return to neutral pH and the concomitant loss of affinity of apotransferrin for its receptor. Transferrin receptor is necessary for development of erythrocytes and the nervous system. A second ligand, the hereditary hemochromatosis protein HFE, competes for binding with transferrin for an overlapping C-terminal binding site. Positively regulates T and B cell proliferation through iron uptake. Acts as a lipid sensor that regulates mitochondrial fusion by regulating activation of the JNK pathway. When dietary levels of stearate (C18:0) are low, promotes activation of the JNK pathway, resulting in HUWE1-mediated ubiquitination and subsequent degradation of the mitofusin MFN2 and inhibition of mitochondrial fusion. When dietary levels of stearate (C18:0) are high, TFRC stearoylation inhibits activation of the JNK pathway and thus degradation of the mitofusin MFN2. Mediates uptake of NICOL1 into fibroblasts where it may regulate extracellular matrix production. Its function is as follows. (Microbial infection) Acts as a receptor for new-world arenaviruses: Guanarito, Junin and Machupo virus. In terms of biological role, (Microbial infection) Acts as a host entry factor for rabies virus that hijacks the endocytosis of TFRC to enter cells. Functionally, (Microbial infection) Acts as a host entry factor for SARS-CoV, MERS-CoV and SARS-CoV-2 viruses that hijack the endocytosis of TFRC to enter cells. The chain is Transferrin receptor protein 1 (TFRC) from Homo sapiens (Human).